The following is a 249-amino-acid chain: Putative TrmH family tRNA/rRNA methyltransferase (249 aa).

Residues Gly-196, Ile-216, and Leu-225 each contribute to the S-adenosyl-L-methionine site.

It belongs to the class IV-like SAM-binding methyltransferase superfamily. RNA methyltransferase TrmH family.

This Staphylococcus saprophyticus subsp. saprophyticus (strain ATCC 15305 / DSM 20229 / NCIMB 8711 / NCTC 7292 / S-41) protein is Putative TrmH family tRNA/rRNA methyltransferase.